The following is a 153-amino-acid chain: 3-hydroxyacyl-[acyl-carrier-protein] dehydratase FabZ (153 aa).

Residue histidine 47 is part of the active site.

It belongs to the thioester dehydratase family. FabZ subfamily.

The protein resides in the cytoplasm. The enzyme catalyses a (3R)-hydroxyacyl-[ACP] = a (2E)-enoyl-[ACP] + H2O. Involved in unsaturated fatty acids biosynthesis. Catalyzes the dehydration of short chain beta-hydroxyacyl-ACPs and long chain saturated and unsaturated beta-hydroxyacyl-ACPs. The polypeptide is 3-hydroxyacyl-[acyl-carrier-protein] dehydratase FabZ (Dichelobacter nodosus (strain VCS1703A)).